Consider the following 503-residue polypeptide: Maturase K (503 aa).

It belongs to the intron maturase 2 family. MatK subfamily.

It is found in the plastid. The protein localises to the chloroplast. Usually encoded in the trnK tRNA gene intron. Probably assists in splicing its own and other chloroplast group II introns. The sequence is that of Maturase K from Rubus ursinus (California blackberry).